A 280-amino-acid chain; its full sequence is Acetyl-coenzyme A carboxylase carboxyl transferase subunit beta (280 aa).

Residues 28–280 (LFLACPYCGA…IVRLHTAEAE (253 aa)) form the CoA carboxyltransferase N-terminal domain. Zn(2+)-binding residues include cysteine 32, cysteine 35, cysteine 50, and cysteine 53. A C4-type zinc finger spans residues 32 to 53 (CPYCGAQMYNKQLGKYRVCAKC).

It belongs to the AccD/PCCB family. As to quaternary structure, acetyl-CoA carboxylase is a heterohexamer composed of biotin carboxyl carrier protein (AccB), biotin carboxylase (AccC) and two subunits each of ACCase subunit alpha (AccA) and ACCase subunit beta (AccD). Zn(2+) is required as a cofactor.

It localises to the cytoplasm. The enzyme catalyses N(6)-carboxybiotinyl-L-lysyl-[protein] + acetyl-CoA = N(6)-biotinyl-L-lysyl-[protein] + malonyl-CoA. It participates in lipid metabolism; malonyl-CoA biosynthesis; malonyl-CoA from acetyl-CoA: step 1/1. In terms of biological role, component of the acetyl coenzyme A carboxylase (ACC) complex. Biotin carboxylase (BC) catalyzes the carboxylation of biotin on its carrier protein (BCCP) and then the CO(2) group is transferred by the transcarboxylase to acetyl-CoA to form malonyl-CoA. The polypeptide is Acetyl-coenzyme A carboxylase carboxyl transferase subunit beta (Leuconostoc mesenteroides subsp. mesenteroides (strain ATCC 8293 / DSM 20343 / BCRC 11652 / CCM 1803 / JCM 6124 / NCDO 523 / NBRC 100496 / NCIMB 8023 / NCTC 12954 / NRRL B-1118 / 37Y)).